We begin with the raw amino-acid sequence, 243 residues long: 4-hydroxy-tetrahydrodipicolinate reductase (243 aa).

Residues 9-14 (GANGKM), 78-80 (GTS), and 104-107 (APNF) each bind NAD(+). His-134 (proton donor/acceptor) is an active-site residue. His-135 serves as a coordination point for (S)-2,3,4,5-tetrahydrodipicolinate. Catalysis depends on Lys-138, which acts as the Proton donor. 144-145 (GT) is a (S)-2,3,4,5-tetrahydrodipicolinate binding site.

It belongs to the DapB family.

It is found in the cytoplasm. The catalysed reaction is (S)-2,3,4,5-tetrahydrodipicolinate + NAD(+) + H2O = (2S,4S)-4-hydroxy-2,3,4,5-tetrahydrodipicolinate + NADH + H(+). It carries out the reaction (S)-2,3,4,5-tetrahydrodipicolinate + NADP(+) + H2O = (2S,4S)-4-hydroxy-2,3,4,5-tetrahydrodipicolinate + NADPH + H(+). It participates in amino-acid biosynthesis; L-lysine biosynthesis via DAP pathway; (S)-tetrahydrodipicolinate from L-aspartate: step 4/4. Functionally, catalyzes the conversion of 4-hydroxy-tetrahydrodipicolinate (HTPA) to tetrahydrodipicolinate. This chain is 4-hydroxy-tetrahydrodipicolinate reductase, found in Legionella pneumophila (strain Corby).